The following is a 155-amino-acid chain: Gene 5 protein (155 aa).

Residues 1 to 26 (MGTRGPIGKRDEERVRRNTPDSPTDT) are disordered. Residues 8–19 (GKRDEERVRRNT) are compositionally biased toward basic and acidic residues.

This is Gene 5 protein (5) from Mycobacterium phage L5 (Mycobacteriophage L5).